We begin with the raw amino-acid sequence, 495 residues long: Trimethylamine methyltransferase MttB (495 aa).

Position 334 (O334) is a non-standard amino acid, pyrrolysine.

Belongs to the trimethylamine methyltransferase family. In terms of assembly, can form a complex with MttC.

It catalyses the reaction Co(I)-[trimethylamine-specific corrinoid protein] + trimethylamine + H(+) = methyl-Co(III)-[trimethylamine-specific corrinoid protein] + dimethylamine. Its pathway is one-carbon metabolism; methanogenesis from trimethylamine. Its function is as follows. Catalyzes the transfer of a methyl group from trimethylamine to the corrinoid cofactor of MttC. The polypeptide is Trimethylamine methyltransferase MttB (Methanosarcina barkeri).